The chain runs to 245 residues: MMLFVDVGNTAMKWRYRDGDVIHQGGGRHEREWSRVVELMLRSLVGMPSEIWVASVAGPEADETIAYYLKEAIRCEPHFYYSCQSDFGVESCYPEPRKLGVDRWVAMIEGFQRYGASIIIDCGSALTIDAVDSRGTFLGGYIVPGLGMLRGALLRDTSDVHIEPGMAQLGLGRSTGECVHNGLLRMSVAFVTEVVLELRQVLDDTCKVLVTGGDAPELIGAFTFEFLHAPDLVLDGLERVAARQQ.

Residue 6 to 13 (DVGNTAMK) coordinates ATP. Residues tyrosine 93 and 100–103 (GVDR) contribute to the substrate site. The Proton acceptor role is filled by aspartate 102. K(+) is bound at residue aspartate 121. Serine 124 lines the ATP pocket. Threonine 175 is a binding site for substrate.

Belongs to the type III pantothenate kinase family. In terms of assembly, homodimer. It depends on NH4(+) as a cofactor. K(+) serves as cofactor.

The protein resides in the cytoplasm. It carries out the reaction (R)-pantothenate + ATP = (R)-4'-phosphopantothenate + ADP + H(+). It participates in cofactor biosynthesis; coenzyme A biosynthesis; CoA from (R)-pantothenate: step 1/5. In terms of biological role, catalyzes the phosphorylation of pantothenate (Pan), the first step in CoA biosynthesis. This chain is Type III pantothenate kinase, found in Alcanivorax borkumensis (strain ATCC 700651 / DSM 11573 / NCIMB 13689 / SK2).